A 187-amino-acid polypeptide reads, in one-letter code: Transcriptional regulator VspR (187 aa).

Its function is as follows. Represses the transcription of several genes encoded within the Vibrio 7th pandemic island-1 (VSP-1), including dncV, VC_0176, VC_0178 and VC_0180. The polypeptide is Transcriptional regulator VspR (vspR) (Vibrio cholerae serotype O1 (strain ATCC 39315 / El Tor Inaba N16961)).